A 515-amino-acid chain; its full sequence is Galactose/methyl galactoside import ATP-binding protein MglA (515 aa).

ABC transporter domains are found at residues 8–243 and 254–499; these read LEMR…VGRE and IPKE…AKYL. ATP is bound at residue 40-47; the sequence is GENGAGKS.

It belongs to the ABC transporter superfamily. Galactose/methyl galactoside importer (TC 3.A.1.2.3) family. The complex is composed of one ATP-binding protein (MglA), two transmembrane proteins (MglC) and a solute-binding protein (MglB).

The protein localises to the cell membrane. The catalysed reaction is D-galactose(out) + ATP + H2O = D-galactose(in) + ADP + phosphate + H(+). It catalyses the reaction methyl beta-D-galactoside(out) + ATP + H2O = methyl beta-D-galactoside(in) + ADP + phosphate + H(+). Its function is as follows. Part of the ABC transporter complex MglABC involved in galactose/methyl galactoside import. Responsible for energy coupling to the transport system. The chain is Galactose/methyl galactoside import ATP-binding protein MglA from Clostridium perfringens (strain 13 / Type A).